The primary structure comprises 122 residues: Large ribosomal subunit protein bL12 (122 aa).

It belongs to the bacterial ribosomal protein bL12 family. As to quaternary structure, homodimer. Part of the ribosomal stalk of the 50S ribosomal subunit. Forms a multimeric L10(L12)X complex, where L10 forms an elongated spine to which 2 to 4 L12 dimers bind in a sequential fashion. Binds GTP-bound translation factors.

Its function is as follows. Forms part of the ribosomal stalk which helps the ribosome interact with GTP-bound translation factors. Is thus essential for accurate translation. In Mycoplasma genitalium (strain ATCC 33530 / DSM 19775 / NCTC 10195 / G37) (Mycoplasmoides genitalium), this protein is Large ribosomal subunit protein bL12.